The sequence spans 244 residues: Phosphoribosyl isomerase A (244 aa).

Catalysis depends on Asp10, which acts as the Proton acceptor. The active-site Proton donor is the Asp129.

It belongs to the HisA/HisF family.

The protein localises to the cytoplasm. The catalysed reaction is 1-(5-phospho-beta-D-ribosyl)-5-[(5-phospho-beta-D-ribosylamino)methylideneamino]imidazole-4-carboxamide = 5-[(5-phospho-1-deoxy-D-ribulos-1-ylimino)methylamino]-1-(5-phospho-beta-D-ribosyl)imidazole-4-carboxamide. It catalyses the reaction N-(5-phospho-beta-D-ribosyl)anthranilate = 1-(2-carboxyphenylamino)-1-deoxy-D-ribulose 5-phosphate. It participates in amino-acid biosynthesis; L-histidine biosynthesis; L-histidine from 5-phospho-alpha-D-ribose 1-diphosphate: step 4/9. It functions in the pathway amino-acid biosynthesis; L-tryptophan biosynthesis; L-tryptophan from chorismate: step 3/5. Its function is as follows. Involved in both the histidine and tryptophan biosynthetic pathways. This chain is Phosphoribosyl isomerase A, found in Mycobacterium ulcerans (strain Agy99).